The chain runs to 226 residues: Ribose-5-phosphate isomerase A (226 aa).

Residues Thr-28 to Thr-31, Asp-83 to Asp-86, and Lys-97 to Gly-100 each bind substrate. Glu-106 (proton acceptor) is an active-site residue. Lys-124 is a binding site for substrate.

It belongs to the ribose 5-phosphate isomerase family. Homotetramer.

The enzyme catalyses aldehydo-D-ribose 5-phosphate = D-ribulose 5-phosphate. Its pathway is carbohydrate biosynthesis; D-ribose 5-phosphate biosynthesis. Functionally, catalyzes the reversible conversion of ribose-5-phosphate to ribulose 5-phosphate. The polypeptide is Ribose-5-phosphate isomerase A (Methanocaldococcus jannaschii (strain ATCC 43067 / DSM 2661 / JAL-1 / JCM 10045 / NBRC 100440) (Methanococcus jannaschii)).